The sequence spans 967 residues: Phosphatidylserine decarboxylase proenzyme 3 (967 aa).

The segment at 217 to 255 is disordered; sequence FIAEPDSSIPPSESSVSISTDTGKETPPSKSKKSSNQPY. The span at 220–237 shows a compositional bias: low complexity; it reads EPDSSIPPSESSVSISTD. A C2 domain is found at 250–373; that stretch reads SSNQPYVSIG…SSAQVDPETG (124 aa). Ca(2+) contacts are provided by Asp-343, Ser-346, and Asp-349. Over residues 532-544 the composition is skewed to low complexity; that stretch reads DQQATQTPQSPSS. The disordered stretch occupies residues 532 to 566; it reads DQQATQTPQSPSSNEESGPGTPTQTSDQYEDSEDS. Over residues 545 to 558 the composition is skewed to polar residues; that stretch reads NEESGPGTPTQTSD. Residues Asp-769, His-825, and Ser-912 each act as charge relay system; for autoendoproteolytic cleavage activity in the active site. Ser-912 acts as the Schiff-base intermediate with substrate; via pyruvic acid; for decarboxylase activity in catalysis. Ser-912 is modified (pyruvic acid (Ser); by autocatalysis). Residues 947–967 are disordered; that stretch reads IGQKIDPNKPTDAEDHSKSDS.

The protein belongs to the phosphatidylserine decarboxylase family. PSD-B subfamily. Eukaryotic type II sub-subfamily. Heterodimer of a large membrane-associated beta subunit and a small pyruvoyl-containing alpha subunit. Requires pyruvate as cofactor. The cofactor is Ca(2+). In terms of processing, is synthesized initially as an inactive proenzyme. Formation of the active enzyme involves a self-maturation process in which the active site pyruvoyl group is generated from an internal serine residue via an autocatalytic post-translational modification. Two non-identical subunits are generated from the proenzyme in this reaction, and the pyruvate is formed at the N-terminus of the alpha chain, which is derived from the carboxyl end of the proenzyme. The autoendoproteolytic cleavage occurs by a canonical serine protease mechanism, in which the side chain hydroxyl group of the serine supplies its oxygen atom to form the C-terminus of the beta chain, while the remainder of the serine residue undergoes an oxidative deamination to produce ammonia and the pyruvoyl prosthetic group on the alpha chain. During this reaction, the Ser that is part of the protease active site of the proenzyme becomes the pyruvoyl prosthetic group, which constitutes an essential element of the active site of the mature decarboxylase.

The protein resides in the golgi apparatus membrane. The protein localises to the endosome membrane. Its subcellular location is the cytoplasm. It catalyses the reaction a 1,2-diacyl-sn-glycero-3-phospho-L-serine + H(+) = a 1,2-diacyl-sn-glycero-3-phosphoethanolamine + CO2. The protein operates within phospholipid metabolism; phosphatidylethanolamine biosynthesis; phosphatidylethanolamine from CDP-diacylglycerol: step 2/2. Catalyzes the formation of phosphatidylethanolamine (PtdEtn) from phosphatidylserine (PtdSer). Plays a central role in phospholipid metabolism and in the interorganelle trafficking of phosphatidylserine. Together with psd1 and psd2, responsible for the majority of phosphatidylethanolamine synthesis. This chain is Phosphatidylserine decarboxylase proenzyme 3, found in Schizosaccharomyces pombe (strain 972 / ATCC 24843) (Fission yeast).